Here is a 92-residue protein sequence, read N- to C-terminus: Small ribosomal subunit protein uS19 (92 aa).

Belongs to the universal ribosomal protein uS19 family.

Its function is as follows. Protein S19 forms a complex with S13 that binds strongly to the 16S ribosomal RNA. The polypeptide is Small ribosomal subunit protein uS19 (Francisella philomiragia subsp. philomiragia (strain ATCC 25017 / CCUG 19701 / FSC 153 / O#319-036)).